We begin with the raw amino-acid sequence, 256 residues long: Imidazole glycerol phosphate synthase subunit HisF (256 aa).

Catalysis depends on residues aspartate 12 and aspartate 131.

The protein belongs to the HisA/HisF family. Heterodimer of HisH and HisF.

Its subcellular location is the cytoplasm. The catalysed reaction is 5-[(5-phospho-1-deoxy-D-ribulos-1-ylimino)methylamino]-1-(5-phospho-beta-D-ribosyl)imidazole-4-carboxamide + L-glutamine = D-erythro-1-(imidazol-4-yl)glycerol 3-phosphate + 5-amino-1-(5-phospho-beta-D-ribosyl)imidazole-4-carboxamide + L-glutamate + H(+). The protein operates within amino-acid biosynthesis; L-histidine biosynthesis; L-histidine from 5-phospho-alpha-D-ribose 1-diphosphate: step 5/9. Functionally, IGPS catalyzes the conversion of PRFAR and glutamine to IGP, AICAR and glutamate. The HisF subunit catalyzes the cyclization activity that produces IGP and AICAR from PRFAR using the ammonia provided by the HisH subunit. The chain is Imidazole glycerol phosphate synthase subunit HisF from Pseudomonas fluorescens (strain SBW25).